A 903-amino-acid chain; its full sequence is Protein translocase subunit SecA (903 aa).

ATP-binding positions include Gln87, Gly105–Thr109, and Asp494. Residues Ser861–Asp883 form a disordered region. Positions Val872–Arg881 are enriched in basic and acidic residues. The Zn(2+) site is built by Cys885, Cys887, Cys896, and Cys897.

This sequence belongs to the SecA family. In terms of assembly, monomer and homodimer. Part of the essential Sec protein translocation apparatus which comprises SecA, SecYEG and auxiliary proteins SecDF. Other proteins may also be involved. It depends on Zn(2+) as a cofactor.

Its subcellular location is the cell membrane. It localises to the cytoplasm. It catalyses the reaction ATP + H2O + cellular proteinSide 1 = ADP + phosphate + cellular proteinSide 2.. Functionally, part of the Sec protein translocase complex. Interacts with the SecYEG preprotein conducting channel. Has a central role in coupling the hydrolysis of ATP to the transfer of proteins into and across the cell membrane, serving as an ATP-driven molecular motor driving the stepwise translocation of polypeptide chains across the membrane. The chain is Protein translocase subunit SecA from Symbiobacterium thermophilum (strain DSM 24528 / JCM 14929 / IAM 14863 / T).